The chain runs to 194 residues: Large ribosomal subunit protein uL18 (194 aa).

Belongs to the universal ribosomal protein uL18 family. In terms of assembly, part of the 50S ribosomal subunit. Contacts the 5S and 23S rRNAs.

This is one of the proteins that bind and probably mediate the attachment of the 5S RNA into the large ribosomal subunit, where it forms part of the central protuberance. The polypeptide is Large ribosomal subunit protein uL18 (Methanococcus aeolicus (strain ATCC BAA-1280 / DSM 17508 / OCM 812 / Nankai-3)).